We begin with the raw amino-acid sequence, 139 residues long: Large ribosomal subunit protein eL32 (139 aa).

The protein belongs to the eukaryotic ribosomal protein eL32 family.

The polypeptide is Large ribosomal subunit protein eL32 (RPL32) (Encephalitozoon cuniculi (strain GB-M1) (Microsporidian parasite)).